Consider the following 369-residue polypeptide: Peptidyl-prolyl cis-trans isomerase D (369 aa).

The 166-residue stretch at Y8–I173 folds into the PPIase cyclophilin-type domain. TPR repeat units lie at residues V218–Y251, V269–D302, and A306–D339.

The protein belongs to the cyclophilin-type PPIase family. PPIase D subfamily.

The protein localises to the cytoplasm. It catalyses the reaction [protein]-peptidylproline (omega=180) = [protein]-peptidylproline (omega=0). In terms of biological role, PPIases accelerate the folding of proteins. It catalyzes the cis-trans isomerization of proline imidic peptide bonds in oligopeptides. In Eremothecium gossypii (strain ATCC 10895 / CBS 109.51 / FGSC 9923 / NRRL Y-1056) (Yeast), this protein is Peptidyl-prolyl cis-trans isomerase D (CPR6).